The sequence spans 769 residues: Serine/threonine-protein kinase PLK4 (769 aa).

In terms of domain architecture, Protein kinase spans 14–267 (YEVQHLLGKG…LEAVLCHPFM (254 aa)). ATP-binding positions include 20-28 (LGKGGFATV) and lysine 43. Residue aspartate 138 is the Proton acceptor of the active site. In terms of domain architecture, Cryptic POLO box 1 (CPB1) spans 381–498 (EDRISVPPLN…ARFVGLVKSK (118 aa)). Residues 499–602 (TPKVTYFSTL…GRRPITDVQP (104 aa)) enclose the Cryptic POLO box 2 (CPB2) domain. The region spanning 660–739 (PIKRINVPDI…IPNIQLKLKT (80 aa)) is the POLO box domain.

It belongs to the protein kinase superfamily. Ser/Thr protein kinase family. CDC5/Polo subfamily. Homodimer. Post-translationally, ubiquitinated by the SCF(Slimb) ubiquitin ligase complex; leading to its degradation by the proteasome during interphase and regulating centriole number and ensuring the block to centriole reduplication.

Its subcellular location is the cytoplasm. The protein resides in the cytoskeleton. The protein localises to the microtubule organizing center. It localises to the centrosome. It is found in the centriole. It carries out the reaction L-seryl-[protein] + ATP = O-phospho-L-seryl-[protein] + ADP + H(+). The enzyme catalyses L-threonyl-[protein] + ATP = O-phospho-L-threonyl-[protein] + ADP + H(+). Functionally, serine/threonine-protein kinase that plays a central role in centriole duplication. Able to trigger procentriole formation on the surface of the mother centriole cylinder, using mother centriole as a platform, leading to the recruitment of centriole biogenesis proteins such as sas-6. When overexpressed, it is able to induce centrosome amplification through the simultaneous generation of multiple procentrioles adjoining each parental centriole during S phase. Centrosome amplification following overexpression can initiate tumorigenesis, highlighting the importance of centrosome regulation in cancers. The protein is Serine/threonine-protein kinase PLK4 (SAK) of Drosophila simulans (Fruit fly).